We begin with the raw amino-acid sequence, 88 residues long: Small ribosomal subunit protein uS15 (88 aa).

This sequence belongs to the universal ribosomal protein uS15 family. As to quaternary structure, part of the 30S ribosomal subunit. Forms a bridge to the 50S subunit in the 70S ribosome, contacting the 23S rRNA.

One of the primary rRNA binding proteins, it binds directly to 16S rRNA where it helps nucleate assembly of the platform of the 30S subunit by binding and bridging several RNA helices of the 16S rRNA. Functionally, forms an intersubunit bridge (bridge B4) with the 23S rRNA of the 50S subunit in the ribosome. The sequence is that of Small ribosomal subunit protein uS15 from Borrelia turicatae (strain 91E135).